A 159-amino-acid polypeptide reads, in one-letter code: Protein-export protein SecB (159 aa).

It belongs to the SecB family. In terms of assembly, homotetramer, a dimer of dimers. One homotetramer interacts with 1 SecA dimer.

Its subcellular location is the cytoplasm. Functionally, one of the proteins required for the normal export of preproteins out of the cell cytoplasm. It is a molecular chaperone that binds to a subset of precursor proteins, maintaining them in a translocation-competent state. It also specifically binds to its receptor SecA. This Aromatoleum aromaticum (strain DSM 19018 / LMG 30748 / EbN1) (Azoarcus sp. (strain EbN1)) protein is Protein-export protein SecB.